Consider the following 61-residue polypeptide: 14-3-3-like protein (61 aa).

It belongs to the 14-3-3 family.

This is 14-3-3-like protein from Zea mays (Maize).